We begin with the raw amino-acid sequence, 255 residues long: Hydroxyacylglutathione hydrolase (255 aa).

Zn(2+) is bound by residues H56, H58, D60, H61, H114, D133, and H171.

This sequence belongs to the metallo-beta-lactamase superfamily. Glyoxalase II family. Monomer. Zn(2+) serves as cofactor.

It carries out the reaction an S-(2-hydroxyacyl)glutathione + H2O = a 2-hydroxy carboxylate + glutathione + H(+). It functions in the pathway secondary metabolite metabolism; methylglyoxal degradation; (R)-lactate from methylglyoxal: step 2/2. Thiolesterase that catalyzes the hydrolysis of S-D-lactoyl-glutathione to form glutathione and D-lactic acid. This is Hydroxyacylglutathione hydrolase from Rhodopseudomonas palustris (strain BisB18).